We begin with the raw amino-acid sequence, 921 residues long: Translation initiation factor IF-2 (921 aa).

Disordered regions lie at residues A81–P118, P175–A194, and V219–E301. The segment covering P96–P112 has biased composition (pro residues). The segment covering R229 to A241 has biased composition (low complexity). Residues K292–E301 show a composition bias toward basic and acidic residues. Residues K421 to K590 enclose the tr-type G domain. The tract at residues G430–T437 is G1. Position 430 to 437 (G430 to T437) interacts with GTP. The tract at residues G455–H459 is G2. The interval D476–G479 is G3. Residues D476 to H480 and N530 to D533 contribute to the GTP site. Residues N530–D533 are G4. A G5 region spans residues S566–K568.

The protein belongs to the TRAFAC class translation factor GTPase superfamily. Classic translation factor GTPase family. IF-2 subfamily.

It is found in the cytoplasm. Functionally, one of the essential components for the initiation of protein synthesis. Protects formylmethionyl-tRNA from spontaneous hydrolysis and promotes its binding to the 30S ribosomal subunits. Also involved in the hydrolysis of GTP during the formation of the 70S ribosomal complex. The chain is Translation initiation factor IF-2 from Pelobacter propionicus (strain DSM 2379 / NBRC 103807 / OttBd1).